The primary structure comprises 238 residues: Large ribosomal subunit protein uL2 (238 aa).

The interval 201-238 (FGGGGHQHPGRPKTIARGTSPGRTVGHVAARQTGRSRK) is disordered.

It belongs to the universal ribosomal protein uL2 family. As to quaternary structure, part of the 50S ribosomal subunit. Forms a bridge to the 30S subunit in the 70S ribosome.

Its function is as follows. One of the primary rRNA binding proteins. Required for association of the 30S and 50S subunits to form the 70S ribosome, for tRNA binding and peptide bond formation. It has been suggested to have peptidyltransferase activity; this is somewhat controversial. Makes several contacts with the 16S rRNA in the 70S ribosome. The sequence is that of Large ribosomal subunit protein uL2 from Methanoregula boonei (strain DSM 21154 / JCM 14090 / 6A8).